An 81-amino-acid polypeptide reads, in one-letter code: ATP synthase subunit C, plastid (81 aa).

2 helical membrane passes run 3-23 (PLIP…ASIG) and 61-81 (EALT…NPFI).

Belongs to the ATPase C chain family. F-type ATPases have 2 components, F(1) - the catalytic core - and F(0) - the membrane proton channel. F(1) has five subunits: alpha(3), beta(3), gamma(1), delta(1), epsilon(1). F(0) has four main subunits: a(1), b(1), b'(1) and c(10-14). The alpha and beta chains form an alternating ring which encloses part of the gamma chain. F(1) is attached to F(0) by a central stalk formed by the gamma and epsilon chains, while a peripheral stalk is formed by the delta, b and b' chains.

The protein localises to the plastid membrane. Its function is as follows. F(1)F(0) ATP synthase produces ATP from ADP in the presence of a proton or sodium gradient. F-type ATPases consist of two structural domains, F(1) containing the extramembraneous catalytic core and F(0) containing the membrane proton channel, linked together by a central stalk and a peripheral stalk. During catalysis, ATP synthesis in the catalytic domain of F(1) is coupled via a rotary mechanism of the central stalk subunits to proton translocation. Functionally, key component of the F(0) channel; it plays a direct role in translocation across the membrane. A homomeric c-ring of between 10-14 subunits forms the central stalk rotor element with the F(1) delta and epsilon subunits. The chain is ATP synthase subunit C, plastid from Aneura mirabilis (Parasitic liverwort).